The primary structure comprises 216 residues: HTH-type transcriptional regulator EthR (216 aa).

Residues 1–10 (MTTSAASQAS) show a composition bias toward polar residues. Positions 1-24 (MTTSAASQASLPRGRRTARPSGDD) are disordered. Positions 23–83 (DDRELAILAT…TLLDRVVNQA (61 aa)) constitute an HTH tetR-type domain. A DNA-binding region (H-T-H motif) is located at residues 46–65 (SVDDLAKGAGISRPTFYFYF).

Homodimer.

Functionally, involved in the repression of the monooxygenase EthA which is responsible of the formation of the active metabolite of ethionamide (ETH). This Mycobacterium bovis (strain ATCC BAA-935 / AF2122/97) protein is HTH-type transcriptional regulator EthR (ethR).